A 98-amino-acid polypeptide reads, in one-letter code: NADH-ubiquinone oxidoreductase chain 4L (98 aa).

The next 3 helical transmembrane spans lie at 1–21, 29–49, and 61–81; these read MSMV…GLLM, SLLC…VTIL, and IILL…LVMV.

It belongs to the complex I subunit 4L family. Core subunit of respiratory chain NADH dehydrogenase (Complex I) which is composed of 45 different subunits.

It localises to the mitochondrion inner membrane. It carries out the reaction a ubiquinone + NADH + 5 H(+)(in) = a ubiquinol + NAD(+) + 4 H(+)(out). Functionally, core subunit of the mitochondrial membrane respiratory chain NADH dehydrogenase (Complex I) which catalyzes electron transfer from NADH through the respiratory chain, using ubiquinone as an electron acceptor. Part of the enzyme membrane arm which is embedded in the lipid bilayer and involved in proton translocation. This Eumetopias jubatus (Steller sea lion) protein is NADH-ubiquinone oxidoreductase chain 4L (MT-ND4L).